Consider the following 375-residue polypeptide: G-protein coupled estrogen receptor 1 (375 aa).

N-acetylmethionine is present on methionine 1. Topologically, residues 1–62 (MDATTPAQTV…QQYVIALFLS (62 aa)) are extracellular. 2 N-linked (GlcNAc...) asparagine glycosylation sites follow: asparagine 32 and asparagine 44. The helical transmembrane segment at 63-84 (CLYTIFLFPIGFVGNILILVVN) threads the bilayer. Over 85-96 (ISFREKMTIPDL) the chain is Cytoplasmic. The helical transmembrane segment at 97 to 120 (YFINLAAADLILVADSLIEVFNLD) threads the bilayer. At 121–132 (EQYYDIAVLCTF) the chain is on the extracellular side. Cysteines 130 and 207 form a disulfide. A helical membrane pass occupies residues 133-153 (MSLFLQINMYSSVFFLTWMSF). Residues 154–175 (DRYLALAKAMRCGLFRTKHHAR) lie on the Cytoplasmic side of the membrane. Residues 176–194 (LSCGLIWMASVSATLVPFT) form a helical membrane-spanning segment. Residues 195–220 (AVHLRHTEEACFCFADVREVQWLEVT) are Extracellular-facing. The helical transmembrane segment at 221–236 (LGFIMPFAIIGLCYSL) threads the bilayer. The Cytoplasmic segment spans residues 237-259 (IVRALIRAHRHRGLRPRRQKALR). Residues 260–280 (MIFAVVLVFFICWLPENVFIS) traverse the membrane as a helical segment. Over 281 to 306 (VHLLQWTQPGDTPCKQSFRHAYPLTG) the chain is Extracellular. A helical transmembrane segment spans residues 307 to 327 (HIVNLAAFSNSCLNPLIYSFL). Over 328 to 375 (GETFRDKLRLYVEQKTSLPALNRFCHATLKAVIPDSTEQSEVRFSSAV) the chain is Cytoplasmic.

The protein belongs to the G-protein coupled receptor 1 family. Interacts with RAMP3; the interaction confers proper subcellular localization and function in cardioprotection. Interacts with KRT7 and KRT8. Interacts with EGFR; the interaction increases after agonist-induced stimulation in cancer-associated fibroblasts (CAF). Interacts with EGFR and ESR1. Interacts (via C-terminus tail motif) with DLG4 (via N-terminus tandem pair of PDZ domains); the interaction is direct and induces the increase of GPER1 protein levels residing at the plasma membrane surface in a estradiol-independent manner. Homodimer. Heterodimer; heterodimerizes with other G-protein-coupled receptor (GPCRs) like CRHR1, HTR1A and PAQR8. Post-translationally, ubiquitinated; ubiquitination occurs at the plasma membrane and leads to proteasome-mediated degradation. In terms of processing, N-glycosylated. Expressed in brain, heart, spleen, preadipocytes, mature adipocytes and primary hippocampal neurons. Expressed in neurons of the hippocampus, hypothalamic paraventricular nucleus (PVH), supraoptic nucleus (SON) and the median eminence. Expressed in the nucleus ambiguous (at protein level). Expressed in brain, pituitary gland, adrenal medulla, renal pelvis, ovary, endothelial cells, visceral fat tissues and islets of Langerhans.

It is found in the nucleus. The protein localises to the cytoplasm. Its subcellular location is the perinuclear region. The protein resides in the cytoskeleton. It localises to the cell membrane. It is found in the endoplasmic reticulum membrane. The protein localises to the golgi apparatus membrane. Its subcellular location is the cell projection. The protein resides in the dendrite. It localises to the cytoplasmic vesicle membrane. It is found in the early endosome. The protein localises to the recycling endosome. Its subcellular location is the golgi apparatus. The protein resides in the trans-Golgi network. It localises to the dendritic spine membrane. It is found in the axon. The protein localises to the postsynaptic density. Its subcellular location is the mitochondrion membrane. Its function is as follows. G-protein coupled estrogen receptor that binds to 17-beta-estradiol (E2) with high affinity, leading to rapid and transient activation of numerous intracellular signaling pathways. Stimulates cAMP production, calcium mobilization and tyrosine kinase Src inducing the release of heparin-bound epidermal growth factor (HB-EGF) and subsequent transactivation of the epidermal growth factor receptor (EGFR), activating downstream signaling pathways such as PI3K/Akt and ERK/MAPK. Mediates pleiotropic functions among others in the cardiovascular, endocrine, reproductive, immune and central nervous systems. Has a role in cardioprotection by reducing cardiac hypertrophy and perivascular fibrosis in a RAMP3-dependent manner. Regulates arterial blood pressure by stimulating vasodilation and reducing vascular smooth muscle and microvascular endothelial cell proliferation. Plays a role in blood glucose homeostasis contributing to the insulin secretion response by pancreatic beta cells. Triggers mitochondrial apoptosis during pachytene spermatocyte differentiation. Stimulates uterine epithelial cell proliferation. Enhances uterine contractility in response to oxytocin. Contributes to thymic atrophy by inducing apoptosis. Attenuates TNF-mediated endothelial expression of leukocyte adhesion molecules. Promotes neuritogenesis in developing hippocampal neurons. Plays a role in acute neuroprotection against NMDA-induced excitotoxic neuronal death. Increases firing activity and intracellular calcium oscillations in luteinizing hormone-releasing hormone (LHRH) neurons. Inhibits early osteoblast proliferation at growth plate during skeletal development. Inhibits mature adipocyte differentiation and lipid accumulation. Involved in the recruitment of beta-arrestin 2 ARRB2 at the plasma membrane in epithelial cells. Also functions as a receptor for aldosterone mediating rapid regulation of vascular contractibility through the PI3K/ERK signaling pathway. Involved in cancer progression regulation. Stimulates cancer-associated fibroblast (CAF) proliferation by a rapid genomic response through the EGFR/ERK transduction pathway. Associated with EGFR, may act as a transcription factor activating growth regulatory genes (c-fos, cyclin D1). Promotes integrin alpha-5/beta-1 and fibronectin (FN) matrix assembly in breast cancer cells. The protein is G-protein coupled estrogen receptor 1 (Gper1) of Mus musculus (Mouse).